The chain runs to 1253 residues: Methionine synthase (1253 aa).

In terms of domain architecture, Hcy-binding spans 6 to 326; it reads QDEIEAILRK…DHIREIAEAV (321 aa). The Zn(2+) site is built by C248, C311, and C312. One can recognise a Pterin-binding domain in the interval 359 to 620; that stretch reads FVNIGERCNV…IHKDLLQLCE (262 aa). Residues 370–372, D437, N458, D525, N567, R573, and R579 each bind (6S)-5,6,7,8-tetrahydrofolate; that span reads GSK. The 98-residue stretch at 650–747 folds into the B12-binding N-terminal domain; sequence QTDEWRNGSI…FMEKEREEAR (98 aa). Methylcob(III)alamin is bound by residues E697, 770–774, H773, S818, T822, and A874; that span reads GDVHD. Positions 760–895 constitute a B12-binding domain; the sequence is QGTIVLATVK…DENLKDDYFE (136 aa). Residues 911–1253 form the AdoMet activation domain; the sequence is SLKERKYLPL…LGPILGYDTD (343 aa). S-adenosyl-L-methionine is bound by residues D962, R1160, and 1215-1216; that span reads YF. T1252 is modified (phosphothreonine).

This sequence belongs to the vitamin-B12 dependent methionine synthase family. As to quaternary structure, monomer. Dimer. Forms a multiprotein complex with MMACHC, MMADHC and MTRR. Methylcob(III)alamin serves as cofactor. It depends on Zn(2+) as a cofactor.

It localises to the cytoplasm. It carries out the reaction (6S)-5-methyl-5,6,7,8-tetrahydrofolate + L-homocysteine = (6S)-5,6,7,8-tetrahydrofolate + L-methionine. It participates in amino-acid biosynthesis; L-methionine biosynthesis via de novo pathway; L-methionine from L-homocysteine (MetH route): step 1/1. Functionally, catalyzes the transfer of a methyl group from methylcob(III)alamin (MeCbl) to homocysteine, yielding enzyme-bound cob(I)alamin and methionine in the cytosol. MeCbl is an active form of cobalamin (vitamin B12) used as a cofactor for methionine biosynthesis. Cob(I)alamin form is regenerated to MeCbl by a transfer of a methyl group from 5-methyltetrahydrofolate. The processing of cobalamin in the cytosol occurs in a multiprotein complex composed of at least MMACHC, MMADHC, MTRR (methionine synthase reductase) and MTR which may contribute to shuttle safely and efficiently cobalamin towards MTR in order to produce methionine. In Rattus norvegicus (Rat), this protein is Methionine synthase (Mtr).